Reading from the N-terminus, the 375-residue chain is Alcohol dehydrogenase 1B (375 aa).

Residue Ser-1 is modified to N-acetylserine. Zn(2+)-binding residues include Cys-46, His-67, Cys-97, Cys-100, Cys-103, Cys-111, and Cys-174. NAD(+) is bound by residues 199-204 (GLGGVG), Asp-223, Lys-228, 293-295 (VGV), and Arg-370.

This sequence belongs to the zinc-containing alcohol dehydrogenase family. Class-I subfamily. In terms of assembly, multimeric (with different ratios of monomers). Requires Zn(2+) as cofactor.

The protein localises to the cytoplasm. It carries out the reaction a primary alcohol + NAD(+) = an aldehyde + NADH + H(+). The enzyme catalyses a secondary alcohol + NAD(+) = a ketone + NADH + H(+). This chain is Alcohol dehydrogenase 1B, found in Saara hardwickii (Indian spiny-tailed lizard).